Reading from the N-terminus, the 439-residue chain is Polygalacturonase QRT2 (439 aa).

A signal peptide spans 1–21; that stretch reads MYEKIIILSVFLLTFLPSCFS. The segment at 43–69 is disordered; it reads RQHQHGHNTRNSHLKNRHGYAPRSSPR. Positions 44–62 are enriched in basic residues; it reads QHQHGHNTRNSHLKNRHGY. PbH1 repeat units follow at residues 201–250 and 251–272; these read CNNL…HVSG and TQNI…SIVS. Catalysis depends on Asp265, which acts as the Proton donor. The active site involves His288. PbH1 repeat units follow at residues 304–325 and 333–354; these read VSNV…RIKT and AKNI…IINQ.

The protein belongs to the glycosyl hydrolase 28 family. As to expression, expressed predominantly in roots with lower expression levels in rosette leaves, flower buds and siliques. Bearly detected in seeds. Found in flowers undergoing floral organ abscission. Also expressed early in anther development, at the time of microspore separation.

It localises to the secreted. Its subcellular location is the cell wall. It carries out the reaction (1,4-alpha-D-galacturonosyl)n+m + H2O = (1,4-alpha-D-galacturonosyl)n + (1,4-alpha-D-galacturonosyl)m.. Functionally, polygalacturonase required for cell type-specific pectin degradation to separate microspores. Involved in anther dehiscence and floral organ abscission. The protein is Polygalacturonase QRT2 (QRT2) of Arabidopsis thaliana (Mouse-ear cress).